A 361-amino-acid polypeptide reads, in one-letter code: Chorismate synthase (361 aa).

Arg48 and Arg54 together coordinate NADP(+). FMN is bound by residues 125–127 (RSS), 238–239 (NA), Gly278, 293–297 (KPTSS), and Arg319.

The protein belongs to the chorismate synthase family. In terms of assembly, homotetramer. The cofactor is FMNH2.

The enzyme catalyses 5-O-(1-carboxyvinyl)-3-phosphoshikimate = chorismate + phosphate. It functions in the pathway metabolic intermediate biosynthesis; chorismate biosynthesis; chorismate from D-erythrose 4-phosphate and phosphoenolpyruvate: step 7/7. In terms of biological role, catalyzes the anti-1,4-elimination of the C-3 phosphate and the C-6 proR hydrogen from 5-enolpyruvylshikimate-3-phosphate (EPSP) to yield chorismate, which is the branch point compound that serves as the starting substrate for the three terminal pathways of aromatic amino acid biosynthesis. This reaction introduces a second double bond into the aromatic ring system. The polypeptide is Chorismate synthase (Edwardsiella ictaluri (strain 93-146)).